We begin with the raw amino-acid sequence, 1096 residues long: Lysine-specific demethylase PHF2 (1096 aa).

Residues Pro-5–Thr-56 form a PHD-type zinc finger. 2-oxoglutarate contacts are provided by Thr-193 and Thr-246. Residues Phe-197–Arg-353 form the JmjC domain. Positions 249 and 251 each coordinate Fe cation. 4 residues coordinate 2-oxoglutarate: Tyr-259, Lys-266, Tyr-321, and Thr-323. Position 321 (Tyr-321) interacts with Fe cation. 2 disordered regions span residues Lys-447–Lys-634 and Gly-646–Arg-674. Position 474 is a phosphoserine (Ser-474). At Thr-479 the chain carries Phosphothreonine. A compositionally biased stretch (pro residues) spans Ser-503 to Pro-518. The residue at position 539 (Ser-539) is a Phosphoserine. Composition is skewed to basic and acidic residues over residues Leu-548–Lys-563 and Asp-578–Lys-624. Position 655 is a phosphoserine (Ser-655). Basic and acidic residues predominate over residues Phe-665 to Arg-674. A phosphoserine mark is found at Ser-681 and Ser-705. Lys-711 participates in a covalent cross-link: Glycyl lysine isopeptide (Lys-Gly) (interchain with G-Cter in SUMO2). Disordered regions lie at residues Thr-719–Leu-799, Ala-817–Leu-846, and Tyr-877–Ala-1078. The residue at position 720 (Lys-720) is an N6-acetyllysine. At Tyr-728 the chain carries Phosphotyrosine. Residues Lys-729–Ser-757 are compositionally biased toward basic and acidic residues. Ser-730, Ser-733, Ser-734, and Ser-738 each carry phosphoserine. Ser-879, Ser-882, and Ser-899 each carry phosphoserine. Residues Arg-916 to Thr-925 are compositionally biased toward basic and acidic residues. Over residues Ser-949 to Leu-959 the composition is skewed to basic residues. Composition is skewed to low complexity over residues Thr-960–Ser-1009 and Thr-1027–Thr-1040. Positions Arg-1053 to Ala-1065 are enriched in polar residues. Ser-1056 carries the phosphoserine; by PKA modification.

This sequence belongs to the JHDM1 histone demethylase family. JHDM1D subfamily. In terms of assembly, component of the PHF2-ARID5B complex, at least composed of PHF2 and ARID5B. Interacts with HNF4A and NR1H4. Interacts with RELA. Post-translationally, phosphorylated by PKA on specific serine residues, leading to the formation of an active lysine demethylase complex. As to expression, widely expressed, including in liver (at protein level).

It localises to the nucleus. The protein resides in the nucleolus. It is found in the chromosome. The protein localises to the centromere. Its subcellular location is the kinetochore. It catalyses the reaction N(6),N(6)-dimethyl-L-lysyl(9)-[histone H3] + 2-oxoglutarate + O2 = N(6)-methyl-L-lysyl(9)-[histone H3] + formaldehyde + succinate + CO2. Enzymatically inactive by itself, and become active following phosphorylation by PKA. Lysine demethylase that demethylates both histones and non-histone proteins. Enzymatically inactive by itself, and becomes active following phosphorylation by PKA: forms a complex with ARID5B and mediates demethylation of methylated ARID5B. Demethylation of ARID5B leads to target the PHF2-ARID5B complex to target promoters, where PHF2 mediates demethylation of dimethylated 'Lys-9' of histone H3 (H3K9me2), followed by transcription activation of target genes. The PHF2-ARID5B complex acts as a coactivator of HNF4A in liver. PHF2 is recruited to trimethylated 'Lys-4' of histone H3 (H3K4me3) at rDNA promoters and promotes expression of rDNA. Involved in the activation of toll-like receptor 4 (TLR4)-target inflammatory genes in macrophages by catalyzing the demethylation of trimethylated histone H4 lysine 20 (H4K20me3) at the gene promoters. This is Lysine-specific demethylase PHF2 from Homo sapiens (Human).